Reading from the N-terminus, the 118-residue chain is Large ribosomal subunit protein bL20 (118 aa).

The protein belongs to the bacterial ribosomal protein bL20 family.

In terms of biological role, binds directly to 23S ribosomal RNA and is necessary for the in vitro assembly process of the 50S ribosomal subunit. It is not involved in the protein synthesizing functions of that subunit. The polypeptide is Large ribosomal subunit protein bL20 (Pseudomonas fluorescens (strain ATCC BAA-477 / NRRL B-23932 / Pf-5)).